A 449-amino-acid chain; its full sequence is Tubulin alpha-2 chain (449 aa).

Residue Gln11 participates in GTP binding. Lys40 carries the post-translational modification N6-acetyllysine. GTP-binding residues include Ser140, Gly144, Thr145, Thr179, Asn206, and Asn228. The active site involves Glu254.

The protein belongs to the tubulin family. In terms of assembly, dimer of alpha and beta chains. A typical microtubule is a hollow water-filled tube with an outer diameter of 25 nm and an inner diameter of 15 nM. Alpha-beta heterodimers associate head-to-tail to form protofilaments running lengthwise along the microtubule wall with the beta-tubulin subunit facing the microtubule plus end conferring a structural polarity. Microtubules usually have 13 protofilaments but different protofilament numbers can be found in some organisms and specialized cells. Acetylation of alpha chains at Lys-40 stabilizes microtubules and affects affinity and processivity of microtubule motors. This modification has a role in multiple cellular functions, ranging from cell motility, cell cycle progression or cell differentiation to intracellular trafficking and signaling.

It localises to the cytoplasm. The protein resides in the cytoskeleton. The catalysed reaction is GTP + H2O = GDP + phosphate + H(+). Its function is as follows. Tubulin is the major constituent of microtubules, a cylinder consisting of laterally associated linear protofilaments composed of alpha- and beta-tubulin heterodimers. Microtubules grow by the addition of GTP-tubulin dimers to the microtubule end, where a stabilizing cap forms. Below the cap, tubulin dimers are in GDP-bound state, owing to GTPase activity of alpha-tubulin. This is Tubulin alpha-2 chain from Stylonychia lemnae (Ciliate).